We begin with the raw amino-acid sequence, 215 residues long: Inositol diphosphatase DSP1 (215 aa).

Positions 58–209 constitute a Tyrosine-protein phosphatase domain; sequence NFSMVDNGIF…VSSFSHIPMS (152 aa). The WPD loop important for active site topology stretch occupies residues 114 to 126; that stretch reads FGIEGNKEPFVNI. Residues Asn-125, Ile-126, His-129, and Lys-130 each coordinate 1D-myo-inositol hexakisphosphate. The active-site Phosphocysteine intermediate is the Cys-150.

This sequence belongs to the protein-tyrosine phosphatase family. Atypical dual-specificity phosphatase Siw14-like subfamily. As to quaternary structure, homodimer and homohexamer; behaves as a monomer in solution. As to expression, highly expressed in siliques and at lower levels in roots, leaves and flowers.

The enzyme catalyses 5-diphospho-1D-myo-inositol 1,2,3,4,6-pentakisphosphate + H2O = 1D-myo-inositol hexakisphosphate + phosphate + H(+). It carries out the reaction 1,5-bis(diphospho)-1D-myo-inositol 2,3,4,6-tetrakisphosphate + H2O = 1-diphospho-1D-myo-inositol 2,3,4,5,6-pentakisphosphate + phosphate + 2 H(+). It catalyses the reaction 3,5-bis(diphospho)-1D-myo-inositol 1,2,4,6-tetrakisphosphate + H2O = 3-diphospho-1D-myo-inositol 1,2,4,5,6-pentakisphosphate + phosphate + 2 H(+). The catalysed reaction is 6-diphospho-1D-myo-inositol pentakisphosphate + H2O = 1D-myo-inositol hexakisphosphate + phosphate + H(+). The enzyme catalyses 5-diphospho-1D-myo-inositol 1,3,4,6-tetrakisphosphate + H2O = 1D-myo-inositol 1,3,4,5,6-pentakisphosphate + phosphate + H(+). Its activity is regulated as follows. Inhibited by manganese, calcium and zinc ions but not magnesium ions. Cleaves the beta-phosphate at the 5-position of soluble inositol pyrophosphates. Has highest activity on 5-diphosphoinositol 1,2,3,4,6-pentakisphosphate (5-InsP(7)), 1,5-bis-diphosphoinositol 2,3,4,6-tetrakisphosphate (1,5-InsP(8)) and 3,5-InsP(8), but has weak activity against 1-diphosphoinositol 2,3,4,5,6-pentakisphosphate (1-InsP(7)). Dephosphorylates the phosphoinositides PI(3,4,5)P3, PI(3,5)P2, but not PI(3)P, PI(3,4)P2 or PI(4,5)P2. Possesses phosphotyrosine phosphatase activity in vitro, and can hydrolyze para-nitrophenyl phosphate, O-methylfluorescein phosphate, polyphosphate and ATP. This chain is Inositol diphosphatase DSP1, found in Arabidopsis thaliana (Mouse-ear cress).